The following is a 386-amino-acid chain: Inactive GDSL esterase/lipase-like protein 23 (386 aa).

A signal peptide spans 1–29; the sequence is MMAKNCNLVSVLCVFLVLTLFNKPITVAG. Ser43 (nucleophile) is an active-site residue. Asn105, Asn165, and Asn288 each carry an N-linked (GlcNAc...) asparagine glycan. Active-site residues include Asp322 and His325.

The protein belongs to the 'GDSL' lipolytic enzyme family. In terms of assembly, part of the PYK10 complex. Interacts with MVP1. Expressed mainly in roots.

Its subcellular location is the endoplasmic reticulum. Functionally, involved in the control of the PYK10 complex size and possibly substrate specificity. May be exported from the endoplasmic reticulum upon interaction with MVP1. The polypeptide is Inactive GDSL esterase/lipase-like protein 23 (GLL23) (Arabidopsis thaliana (Mouse-ear cress)).